The primary structure comprises 311 residues: Methionyl-tRNA formyltransferase (311 aa).

(6S)-5,6,7,8-tetrahydrofolate is bound at residue 112 to 115 (SLLP).

It belongs to the Fmt family.

The enzyme catalyses L-methionyl-tRNA(fMet) + (6R)-10-formyltetrahydrofolate = N-formyl-L-methionyl-tRNA(fMet) + (6S)-5,6,7,8-tetrahydrofolate + H(+). Functionally, attaches a formyl group to the free amino group of methionyl-tRNA(fMet). The formyl group appears to play a dual role in the initiator identity of N-formylmethionyl-tRNA by promoting its recognition by IF2 and preventing the misappropriation of this tRNA by the elongation apparatus. The protein is Methionyl-tRNA formyltransferase of Bradyrhizobium sp. (strain ORS 278).